Consider the following 519-residue polypeptide: Flavin-dependent halogenase rdc2 (519 aa).

An N-terminal signal peptide occupies residues 1–21 (MSVPKSCTILVAGGGPAGSYA). Gly14, Ala17, and Glu47 together coordinate FAD. Chloride is bound by residues Ser324 and Gly325.

This sequence belongs to the flavin-dependent halogenase family.

Its pathway is secondary metabolite biosynthesis. Functionally, flavin-dependent halogenase; part of the gene cluster that mediates the biosynthesis of radicicol, a resorcylic acid lactone (RAL) that irreversibly inhibits the HSP90 molecular chaperone, an important target for cancer chemotherapy. Within the cluster, rdc2 is involved in the chlorination of the resorcylic acid lactone (RAL) structure to convert monocillin I into radicicol. Also chlorinates monocillin II to produce 6-cholomonocillin II and monocilllin IV to produce 13-chloromonocillin IV. In contrast to most fungal halogenases, rdc2 has a broad substrate specificity and can accept a variety of macrolactones as the substrates to generate chlorinated derivatives, including dihydroresorcylide, zearalenone, curvularin, or even curcumin. Rdc2 is able to dichlorinate dihydroresorcylide and monocillin IV. Dihydroresorcylide is first chlorinated at position 11 to produce 11-chlorodihydroresorcylide which can be further chlorinated by rdc2 at possition 13. Mororeover, rdc2 can incorporate bromine into dihydroresorcylide to yield the corresponding mono- and di-brominated derivatives. Finally, rdc2 is also able to halogenate the isoquinolines 4-hydroxyisoquinoline and 6-hydroxyisoquinoline into 3-chloro-4-hydroxyisoquinoline and 5-chloro-6-hydroxyisoquinoline, respectively. The radicicol cluster encodes only two apparent post-PKS enzymes, a cytochrome P450 monooxygenase (rdc4) and a non-heme halogenase (rdc2) that could introduce the epoxide and the chlorine, respectively. If this cluster includes all the genes required for radicicol biosynthesis, the remaining structural features of radicicol are presumably generated by the PKSs rdc1 and rdc5. The C-2' ketone could arise if the R-PKS rdc5 and NR-PKS rdc1 each carry out four iterations, in contrast to the five iteration-three iteration split for the hypothemycin PKSs. The origin of the cis 5',6' double bond is not known. The radicicol R-PKS rdc5 ER domain may catalyze either double bond isomerization or reduction in the third iteration. In Metacordyceps chlamydosporia (Nematophagous fungus), this protein is Flavin-dependent halogenase rdc2.